Consider the following 307-residue polypeptide: Reaction center protein M chain (307 aa).

Helical transmembrane passes span 52–78 (LGIA…WYQA), 110–139 (QGGV…ADQL), and 142–167 (GKHM…PILM). Residues H181 and H201 each coordinate (7R,8Z)-bacteriochlorophyll b. Residues 197–225 (YNPFHGLSIAALYGSALLFAMHGATILAV) traverse the membrane as a helical segment. Fe cation-binding residues include H218 and E233. W251 provides a ligand contact to a ubiquinone. Residues 259–285 (ATMEGIHRWAIWMAVMVTLTGGIGILL) traverse the membrane as a helical segment. H265 contributes to the Fe cation binding site.

It belongs to the reaction center PufL/M/PsbA/D family. As to quaternary structure, reaction center is composed of four bacteriochlorophylls, two bacteriopheophytins, two ubiquinones, one iron, and three highly hydrophobic polypeptide chains (designated L, M, and H).

Its subcellular location is the cellular chromatophore membrane. Its function is as follows. The reaction center is a membrane-bound complex that mediates the initial photochemical event in the electron transfer process of photosynthesis. The sequence is that of Reaction center protein M chain (pufM) from Rhodobacter capsulatus (Rhodopseudomonas capsulata).